A 2319-amino-acid polypeptide reads, in one-letter code: AT-rich interactive domain-containing protein 1B (2319 aa).

2 stretches are compositionally biased toward low complexity: residues 1–21 and 43–56; these read MAARAAAAAAAAAARARARAG and GARGAAAAAAAPGP. Disordered regions lie at residues 1–74, 155–306, 321–414, 487–546, 577–1062, and 1085–1129; these read MAAR…VHHH, VGEA…GGGG, APAS…GAGA, RFAG…AGAA, QQRS…LMNT, and DMMS…KITK. A2 carries the N-acetylalanine modification. Residues 57-68 show a composition bias toward gly residues; sequence MLGGGGDGGGGL. Basic residues predominate over residues 165 to 188; that stretch reads QQHHHHHHAHHHHHHAHHLHHHHA. Composition is skewed to low complexity over residues 189 to 215 and 343 to 363; these read LQQQLNQFQQQQQQQQQQQQQQQQQQH and SPGMGMMHSASAAAAGAPGSM. Over residues 365–379 the composition is skewed to polar residues; the sequence is PLQNSHEGYPNSQCN. Residues 388–414 show a composition bias toward gly residues; that stretch reads GAGGGGGGGGGGGGGSGGGGGGGGAGA. Asymmetric dimethylarginine is present on R487. Residues 489 to 510 show a composition bias toward polar residues; that stretch reads AGQNQHPSGATPTLNQLLTSPS. The LXXLL signature appears at 502–506; sequence LNQLL. Low complexity predominate over residues 536–546; sequence PQSQAAAAGAA. S585 and S599 each carry phosphoserine. Position 608 is an asymmetric dimethylarginine (R608). Residues 620-630 show a composition bias toward low complexity; the sequence is SQPQQSSPYPG. The residue at position 640 (R640) is an Asymmetric dimethylarginine. Composition is skewed to low complexity over residues 651–670, 677–687, 695–712, 767–783, 811–832, and 840–849; these read GAMAGMQYPQQQMPPQYGQQ, QQGQQPYYSQQ, PQAQYLPSQSQQRYQPQQ, SSAVSASGSTSSQGDQS, GSPVGSNQSRSGPISPASIPGS, and GSQSESSSHP. Polar residues predominate over residues 866 to 880; that stretch reads TQRNPQMAQYGPQQT. Residues 881–892 are compositionally biased toward low complexity; sequence GPSMSPHPSPGG. Polar residues-rich tracts occupy residues 899 to 923 and 947 to 958; these read SSFQQSNSSGTYGPQMSQYGPQGNY and SANNQMHGQGPS. Low complexity-rich tracts occupy residues 980–994 and 1014–1028; these read PGNMSSMTPSSPGMS and EAAAAVMQAAANSAQ. Residues 1029 to 1062 are compositionally biased toward polar residues; the sequence is SRQGSFPGMNQSGLMASSSPYSQPMNNSSSLMNT. In terms of domain architecture, ARID spans 1136–1227; the sequence is EPERKLWVDR…YLFAFECKIE (92 aa). 4 disordered regions span residues 1230 to 1334, 1346 to 1443, 1475 to 1647, and 1782 to 1852; these read EEPP…QQGM, EPNK…PNYK, NQYG…FLPS, and DHNA…KQAS. Composition is skewed to polar residues over residues 1254-1273 and 1287-1304; these read ANSGSLQGPQTPQSTGSNSM and STPHGQMTPMQGGRSSTI. Low complexity predominate over residues 1305 to 1319; the sequence is SVHDPFSDVSDSSFP. Polar residues-rich tracts occupy residues 1320–1334 and 1364–1388; these read KRNSMTPNAPYQQGM and PFMTQGQMPNSSMQDMYNQSPSGAM. Low complexity predominate over residues 1426 to 1440; sequence PPYGGHQPGLYPQQP. The Nuclear localization signal motif lies at 1441–1460; it reads NYKRHMDGMYGPPAKRHEGD. Composition is skewed to polar residues over residues 1522–1534 and 1579–1601; these read LQSSSSEGPQQNM and ESQWPSHVSQRQPYMSSSASMQP. Phosphoserine is present on residues S1625, S1638, and S1642. Positions 1627-1641 are enriched in polar residues; that stretch reads ASFQRSLENRMSPSK. Residues 1782–1791 show a composition bias toward basic and acidic residues; the sequence is DHNAARKDDS. A Phosphoserine modification is found at S1798. Residues 1799 to 1823 are compositionally biased toward acidic residues; it reads GKEEEDAECIDDDEEDEEDEEEDSE. A compositionally biased stretch (basic and acidic residues) spans 1842–1852; that stretch reads ADPKEKPKQAS. K1860 is subject to N6-acetyllysine. Disordered regions lie at residues 1904–1941 and 1954–1973; these read FESKMEIPPRRRPPPPLSSAGRKKEQEGKGDSEEQQEK and RPGALPEDANPGPQTESSKF. Residues 1925 to 1940 are compositionally biased toward basic and acidic residues; sequence RKKEQEGKGDSEEQQE. The short motif at 2119 to 2123 is the LXXLL element; that stretch reads LDGLL.

Component of SWI/SNF chromatin remodeling complexes, in some of which it can be mutually exclusive with ARID1B/BAF250B. The canonical complex contains a catalytic subunit (either SMARCA4/BRG1/BAF190A or SMARCA2/BRM/BAF190B) and at least SMARCE1, ACTL6A/BAF53, SMARCC1/BAF155, SMARCC2/BAF170, and SMARCB1/SNF5/BAF47. Other subunits specific to each of the complexes may also be present permitting several possible combinations developmentally and tissue specific. Component of the BAF (SWI/SNF-A) complex, which includes at least actin (ACTB), ARID1A/BAF250A, ARID1B/BAF250B, SMARCA2/BRM, SMARCA4/BRG1/BAF190A, ACTL6A/BAF53, ACTL6B/BAF53B, SMARCE1/BAF57, SMARCC1/BAF155, SMARCC2/BAF170, SMARCB1/SNF5/INI1, and one or more SMARCD1/BAF60A, SMARCD2/BAF60B, or SMARCD3/BAF60C. In muscle cells, the BAF complex also contains DPF3. Component of neural progenitors-specific chromatin remodeling complex (npBAF complex) composed of at least, ARID1A/BAF250A or ARID1B/BAF250B, SMARCD1/BAF60A, SMARCD3/BAF60C, SMARCA2/BRM/BAF190B, SMARCA4/BRG1/BAF190A, SMARCB1/BAF47, SMARCC1/BAF155, SMARCE1/BAF57, SMARCC2/BAF170, PHF10/BAF45A, ACTL6A/BAF53A and actin. Component of neuron-specific chromatin remodeling complex (nBAF complex) composed of at least, ARID1A/BAF250A or ARID1B/BAF250B, SMARCD1/BAF60A, SMARCD3/BAF60C, SMARCA2/BRM/BAF190B, SMARCA4/BRG1/BAF190A, SMARCB1/BAF47, SMARCC1/BAF155, SMARCE1/BAF57, SMARCC2/BAF170, DPF1/BAF45B, DPF3/BAF45C, ACTL6B/BAF53B and actin. Component of a SWI/SNF-like EBAFb complex, at least composed of SMARCA4/BRG1/BAF190A, SMARCB1/BAF47/SNF5, ACTL6A/BAF53A, SMARCE1/BAF57, SMARCD1/BAF60A, SMARCD2/BAF60B, SMARCC1/BAF155, SMARCC2/BAF170, ARID1B/BAF250B, MLLT1/ENL and actin. Interacts through its C-terminus with SMARCA2/BRM/BAF190B and SMARCA4/BRG1/BAF190A. Interacts with SMARCC1/BAF155. Widely expressed with high levels in heart, skeletal muscle and kidney.

It is found in the nucleus. Involved in transcriptional activation and repression of select genes by chromatin remodeling (alteration of DNA-nucleosome topology). Component of SWI/SNF chromatin remodeling complexes that carry out key enzymatic activities, changing chromatin structure by altering DNA-histone contacts within a nucleosome in an ATP-dependent manner. Belongs to the neural progenitors-specific chromatin remodeling complex (npBAF complex) and the neuron-specific chromatin remodeling complex (nBAF complex). During neural development a switch from a stem/progenitor to a postmitotic chromatin remodeling mechanism occurs as neurons exit the cell cycle and become committed to their adult state. The transition from proliferating neural stem/progenitor cells to postmitotic neurons requires a switch in subunit composition of the npBAF and nBAF complexes. As neural progenitors exit mitosis and differentiate into neurons, npBAF complexes which contain ACTL6A/BAF53A and PHF10/BAF45A, are exchanged for homologous alternative ACTL6B/BAF53B and DPF1/BAF45B or DPF3/BAF45C subunits in neuron-specific complexes (nBAF). The npBAF complex is essential for the self-renewal/proliferative capacity of the multipotent neural stem cells. The nBAF complex along with CREST plays a role regulating the activity of genes essential for dendrite growth. Binds DNA non-specifically. The sequence is that of AT-rich interactive domain-containing protein 1B from Homo sapiens (Human).